Consider the following 49-residue polypeptide: Large ribosomal subunit protein bL33B (49 aa).

Belongs to the bacterial ribosomal protein bL33 family.

This Listeria innocua serovar 6a (strain ATCC BAA-680 / CLIP 11262) protein is Large ribosomal subunit protein bL33B (rpmG2).